Consider the following 382-residue polypeptide: Pectinesterase (382 aa).

The signal sequence occupies residues 1 to 16 (MKIIVLLLLAVVLASA). A disulfide bond links Cys153 and Cys164. An N-linked (GlcNAc...) asparagine glycan is attached at Asn179. Gln193 is a substrate binding site. The active-site Proton donor is the Asp216. Asp242 (nucleophile) is an active-site residue. Substrate-binding residues include Arg306 and Trp308. Asn340 and Asn376 each carry an N-linked (GlcNAc...) asparagine glycan.

This sequence belongs to the pectinesterase family. As to expression, expressed throughout the midgut with particularly strong expression in the ventriculus.

The protein localises to the secreted. The catalysed reaction is [(1-&gt;4)-alpha-D-galacturonosyl methyl ester](n) + n H2O = [(1-&gt;4)-alpha-D-galacturonosyl](n) + n methanol + n H(+). It participates in glycan metabolism; pectin degradation; 2-dehydro-3-deoxy-D-gluconate from pectin: step 1/5. Pectinesterase which probably plays an important role in the digestion of plant cell walls. The chain is Pectinesterase from Sitophilus oryzae (Rice weevil).